We begin with the raw amino-acid sequence, 439 residues long: GTPase Obg (439 aa).

The Obg domain occupies 3–162 (GEFYDSARIF…REIELELKLL (160 aa)). The region spanning 163-333 (ADVGLIGFPN…LLQRVAERLR (171 aa)) is the OBG-type G domain. GTP-binding positions include 169-176 (GFPNAGKS), 194-198 (FTTLQ), 215-218 (DIPG), 285-288 (NKAD), and 314-316 (SAA). Mg(2+) is bound by residues Ser-176 and Thr-196. Residues 351–428 (VPEVDERLYT…IEQAAFDWED (78 aa)) form the OCT domain.

It belongs to the TRAFAC class OBG-HflX-like GTPase superfamily. OBG GTPase family. Monomer. Mg(2+) is required as a cofactor.

The protein localises to the cytoplasm. Its function is as follows. An essential GTPase which binds GTP, GDP and possibly (p)ppGpp with moderate affinity, with high nucleotide exchange rates and a fairly low GTP hydrolysis rate. Plays a role in control of the cell cycle, stress response, ribosome biogenesis and in those bacteria that undergo differentiation, in morphogenesis control. The chain is GTPase Obg from Roseiflexus castenholzii (strain DSM 13941 / HLO8).